Consider the following 245-residue polypeptide: Putative protein phosphatase 2C-like protein 45 (245 aa).

Positions Met-1–Leu-188 constitute a PPM-type phosphatase domain.

This sequence belongs to the PP2C family.

The protein is Putative protein phosphatase 2C-like protein 45 of Arabidopsis thaliana (Mouse-ear cress).